A 310-amino-acid polypeptide reads, in one-letter code: Cytosolic Fe-S cluster assembly factor Nubp1 homolog (310 aa).

[4Fe-4S] cluster-binding residues include Cys9, Cys23, Cys26, and Cys32. 63–70 (GKGGVGKS) lines the ATP pocket. Residues Cys240 and Cys243 each coordinate [4Fe-4S] cluster.

This sequence belongs to the Mrp/NBP35 ATP-binding proteins family. NUBP1/NBP35 subfamily. As to quaternary structure, heterotetramer of 2 Nubp1 and 2 Nubp2 chains. The cofactor is [4Fe-4S] cluster.

Its subcellular location is the cytoplasm. Its function is as follows. Component of the cytosolic iron-sulfur (Fe/S) protein assembly (CIA) machinery. Required for maturation of extramitochondrial Fe-S proteins. The Nubp1-Nubp2 heterotetramer forms a Fe-S scaffold complex, mediating the de novo assembly of an Fe-S cluster and its transfer to target apoproteins. The polypeptide is Cytosolic Fe-S cluster assembly factor Nubp1 homolog (Drosophila virilis (Fruit fly)).